Here is a 64-residue protein sequence, read N- to C-terminus: Large ribosomal subunit protein bL33 (64 aa).

The protein belongs to the bacterial ribosomal protein bL33 family.

The sequence is that of Large ribosomal subunit protein bL33 from Synechococcus sp. (strain WH7803).